We begin with the raw amino-acid sequence, 809 residues long: Spindle pole body component alp14 (809 aa).

HEAT repeat units follow at residues 127-164 (DSAAPVIESIIPSLSARSPKVIASNVAAIASLVEQFGA) and 167-204 (IPSKMIIPHISNLFGHADKNVRKEASRLTVNIYRWTGD). 3 disordered regions span residues 233–274 (PPKQ…SDDQ), 507–608 (AKAP…SGAL), and 619–638 (ELDDPAPQPAKHSRVDRYEH). A compositionally biased stretch (polar residues) spans 239-253 (FLKSQQPTSEPNVET). Over residues 262 to 274 (ENEESEPEPSDDQ) the composition is skewed to acidic residues. Positions 509 to 518 (APTKKSKVKP) are enriched in basic residues. Low complexity-rich tracts occupy residues 526–551 (VVVPSNAKAVKKSVVPSSPVVPSPRK) and 582–595 (SRGLSRGTSSSLQQ). S543 and S548 each carry phosphoserine. Polar residues predominate over residues 597–608 (VKASTPLNSGAL). Positions 637–697 (EHPKVLEDND…NTLRSARKAS (61 aa)) form a coiled coil. A phosphoserine mark is found at S697 and S720.

The protein belongs to the TOG/XMAP215 family. Interacts with alp14.

Its subcellular location is the cytoplasm. The protein resides in the cytoskeleton. The protein localises to the microtubule organizing center. It is found in the spindle pole body. It localises to the chromosome. Its subcellular location is the centromere. The protein resides in the kinetochore. Functionally, required for bipolar spindle formation and proper chromosome segregation. Has a role in connecting the kinetochores and the plus end of pole to chromosome microtubules. Also required for the activation of the spindle checkpoint pathway. The sequence is that of Spindle pole body component alp14 (alp14) from Schizosaccharomyces pombe (strain 972 / ATCC 24843) (Fission yeast).